Consider the following 1715-residue polypeptide: Neurexin-2 (1715 aa).

An N-terminal signal peptide occupies residues 1-29 (MALGSRWRPPPQLPPLLLLLALVAGVRGL). The region spanning 30-206 (EFGGGPGQWA…LRGAAADPLC (177 aa)) is the Laminin G-like 1 domain. The Extracellular segment spans residues 30 to 1639 (EFGGGPGQWA…EVIRESSSTT (1610 aa)). An N-linked (GlcNAc...) asparagine glycan is attached at Asn60. The EGF-like 1 domain maps to 202 to 242 (ADPLCAPARNPCANGGLCTVLAPGEVGCDCSHTGFGGKFCS). 3 disulfide bridges follow: Cys206–Cys219, Cys213–Cys229, and Cys231–Cys241. 2 Laminin G-like domains span residues 289–486 (VATF…SFRC) and 493–686 (DPVT…APFC). Asp335 is a binding site for Ca(2+). The N-linked (GlcNAc...) asparagine glycan is linked to Asn338. Leu352 and Met420 together coordinate Ca(2+). 5 cysteine pairs are disulfide-bonded: Cys450-Cys486, Cys657-Cys686, Cys694-Cys705, Cys699-Cys714, and Cys716-Cys726. One can recognise an EGF-like 2 domain in the interval 690–727 (TLKQCASAPCRNGGICREGWNRFVCDCIGTGFLGRVCE). Laminin G-like domains follow at residues 732-907 (VLSY…ITYC) and 921-1096 (DPVT…ERGC). 2 residues coordinate Ca(2+): Asp779 and Leu796. The N-linked (GlcNAc...) asparagine glycan is linked to Asn844. Position 857 (Arg857) interacts with Ca(2+). 4 cysteine pairs are disulfide-bonded: Cys1068–Cys1096, Cys1103–Cys1114, Cys1108–Cys1123, and Cys1125–Cys1135. One can recognise an EGF-like 3 domain in the interval 1099–1136 (PSTTCTEESCANQGVCLQQWDGFTCDCTMTSYGGPVCN). Positions 1140–1348 (TTYIFGKGGA…HLRLVGEGPS (209 aa)) constitute a Laminin G-like 6 domain. 2 residues coordinate Ca(2+): Asp1192 and Val1209. Asn1239 carries N-linked (GlcNAc...) asparagine glycosylation. 2 residues coordinate Ca(2+): Ile1291 and Asn1293. Residue Ser1403 is glycosylated (O-linked (Xyl...) (heparan sulfate) serine). Disordered regions lie at residues 1461–1511 (ATQD…LPPT), 1529–1549 (LLSPRKPAPRPNLRTDGATGA), and 1583–1626 (LGPG…RGPP). A helical membrane pass occupies residues 1640 to 1660 (GMVVGIVAAAALCILILLYAM). The Cytoplasmic segment spans residues 1661–1715 (YKYRNRDEGSYQVDQSRNYISNSAQSNGAVVKEKAPAAPKTPSKAKKNKDKEYYV). The disordered stretch occupies residues 1682–1715 (NSAQSNGAVVKEKAPAAPKTPSKAKKNKDKEYYV).

The protein belongs to the neurexin family. The laminin G-like domain 1 binds to NXPH1. Interacts with PATJ. Interacts with CBLN1, CBLN2 and, less avidly, with CBLN4. Specific isoforms bind neuroligins NLGN1, NLGN2 and NLGN3. Isoform 5c/alpha-2C binds to alpha-dystroglycan. Interacts (via Laminin G-like 1 domain) with IGSF21 (Ig-like 1 domain) in a trans-interaction manner. Interacts with CLSTN3. O-glycosylated; contains heparan sulfate. Heparan sulfate attachment is required for synapse development by mediating interactions with neuroligins. As to expression, brain (neuronal synapse).

The protein resides in the presynaptic cell membrane. Neuronal cell surface protein that may be involved in cell recognition and cell adhesion. May mediate intracellular signaling. This Rattus norvegicus (Rat) protein is Neurexin-2 (Nrxn2).